The primary structure comprises 107 residues: Small ribosomal subunit protein bS16 (107 aa).

The disordered stretch occupies residues 85–107 (REARNNPEKAVPRKERKAAEAGK).

Belongs to the bacterial ribosomal protein bS16 family.

This is Small ribosomal subunit protein bS16 from Rhodopseudomonas palustris (strain BisB5).